A 396-amino-acid chain; its full sequence is 1-deoxy-D-xylulose 5-phosphate reductoisomerase (396 aa).

NADPH-binding residues include threonine 10, glycine 11, serine 12, isoleucine 13, and asparagine 123. Lysine 124 serves as a coordination point for 1-deoxy-D-xylulose 5-phosphate. Glutamate 125 contributes to the NADPH binding site. Residue aspartate 149 coordinates Mn(2+). Residues serine 150, glutamate 151, serine 185, and histidine 208 each contribute to the 1-deoxy-D-xylulose 5-phosphate site. Residue glutamate 151 coordinates Mn(2+). Glycine 214 contributes to the NADPH binding site. 4 residues coordinate 1-deoxy-D-xylulose 5-phosphate: serine 221, asparagine 226, lysine 227, and glutamate 230. Glutamate 230 lines the Mn(2+) pocket.

The protein belongs to the DXR family. It depends on Mg(2+) as a cofactor. Mn(2+) is required as a cofactor.

The enzyme catalyses 2-C-methyl-D-erythritol 4-phosphate + NADP(+) = 1-deoxy-D-xylulose 5-phosphate + NADPH + H(+). It participates in isoprenoid biosynthesis; isopentenyl diphosphate biosynthesis via DXP pathway; isopentenyl diphosphate from 1-deoxy-D-xylulose 5-phosphate: step 1/6. Catalyzes the NADPH-dependent rearrangement and reduction of 1-deoxy-D-xylulose-5-phosphate (DXP) to 2-C-methyl-D-erythritol 4-phosphate (MEP). This Shewanella sp. (strain MR-7) protein is 1-deoxy-D-xylulose 5-phosphate reductoisomerase.